Consider the following 270-residue polypeptide: Fluoride-specific ion channel FluC 1 (270 aa).

4 helical membrane passes run 4 to 24 (IIIL…FIML), 35 to 55 (LDIL…TALY), 67 to 87 (IIGT…YGSV), and 96 to 116 (AFLI…VAVL). Na(+)-binding residues include G74 and S77.

This sequence belongs to the fluoride channel Fluc/FEX (TC 1.A.43) family.

It localises to the cell inner membrane. It catalyses the reaction fluoride(in) = fluoride(out). With respect to regulation, na(+) is not transported, but it plays an essential structural role and its presence is essential for fluoride channel function. Fluoride-specific ion channel. Important for reducing fluoride concentration in the cell, thus reducing its toxicity. This is Fluoride-specific ion channel FluC 1 from Brucella abortus biovar 1 (strain 9-941).